The sequence spans 129 residues: Trefoil factor 2 (129 aa).

The signal sequence occupies residues 1–23 (MGPRGAPLLVVVLVLGLHALAEG). 2 consecutive P-type domains span residues 29-73 (CRCS…FHPL) and 79-122 (EQCV…FFPQ). 7 cysteine pairs are disulfide-bonded: cysteine 29–cysteine 127, cysteine 31–cysteine 58, cysteine 42–cysteine 57, cysteine 52–cysteine 69, cysteine 81–cysteine 107, cysteine 91–cysteine 106, and cysteine 101–cysteine 118.

In terms of tissue distribution, expressed in the digestive tract, where it was found predominantly in the stomach with highest expression in the antrum. It is secreted predominantly from antral mucous cells into the lumen of the gastrointestinal tract.

Its subcellular location is the secreted. Its function is as follows. Inhibits gastrointestinal motility and gastric acid secretion. Could function as a structural component of gastric mucus, possibly by stabilizing glycoproteins in the mucus gel through interactions with carbohydrate side chains. This Rattus norvegicus (Rat) protein is Trefoil factor 2 (Tff2).